A 367-amino-acid polypeptide reads, in one-letter code: Probable peptidoglycan glycosyltransferase FtsW (367 aa).

9 consecutive transmembrane segments (helical) span residues 32–52 (LIFI…PMKF), 57–77 (AFWG…PGIG), 87–107 (IPIG…MIVF), 119–139 (IHGL…CFLL), 149–169 (MVVV…FALF), 171–191 (LLFL…PWRM), 251–271 (VVGE…FVLL), 296–316 (GVVV…FGVF), and 323–343 (LPFI…FGLL).

The protein belongs to the SEDS family. FtsW subfamily.

Its subcellular location is the cell inner membrane. It catalyses the reaction [GlcNAc-(1-&gt;4)-Mur2Ac(oyl-L-Ala-gamma-D-Glu-L-Lys-D-Ala-D-Ala)](n)-di-trans,octa-cis-undecaprenyl diphosphate + beta-D-GlcNAc-(1-&gt;4)-Mur2Ac(oyl-L-Ala-gamma-D-Glu-L-Lys-D-Ala-D-Ala)-di-trans,octa-cis-undecaprenyl diphosphate = [GlcNAc-(1-&gt;4)-Mur2Ac(oyl-L-Ala-gamma-D-Glu-L-Lys-D-Ala-D-Ala)](n+1)-di-trans,octa-cis-undecaprenyl diphosphate + di-trans,octa-cis-undecaprenyl diphosphate + H(+). Its pathway is cell wall biogenesis; peptidoglycan biosynthesis. In terms of biological role, peptidoglycan polymerase that is essential for cell division. This chain is Probable peptidoglycan glycosyltransferase FtsW, found in Taylorella equigenitalis (strain MCE9).